The chain runs to 156 residues: MSRRNAAEKRPVLPDPQFNNRLATMMVARLMKHGKKSTAQKILSQAFGLINERTGGDPIELFETAIKNATPLVEVRARRVGGATYQVPMEVRQERGTAMALRWLVNFSRSRNGRSMAHKLAGELMDAANEAGNAVRKREETHKMAEANKAFAHYRY.

The protein belongs to the universal ribosomal protein uS7 family. Part of the 30S ribosomal subunit. Contacts proteins S9 and S11.

Its function is as follows. One of the primary rRNA binding proteins, it binds directly to 16S rRNA where it nucleates assembly of the head domain of the 30S subunit. Is located at the subunit interface close to the decoding center, probably blocks exit of the E-site tRNA. The protein is Small ribosomal subunit protein uS7 of Prochlorococcus marinus (strain SARG / CCMP1375 / SS120).